The following is a 123-amino-acid chain: Seripauperin-16 (123 aa).

The N-terminal stretch at 1 to 20 (MVKLTSIAAGVAAIAAGVAA) is a signal peptide.

Belongs to the SRP1/TIP1 family. Seripauperin subfamily.

The protein is Seripauperin-16 (PAU16) of Saccharomyces cerevisiae (strain ATCC 204508 / S288c) (Baker's yeast).